A 192-amino-acid polypeptide reads, in one-letter code: Sporulation initiation phosphotransferase B (192 aa).

The residue at position 30 (H30) is a Phosphohistidine.

Homodimer. Dimerization is essential for activity as both monomers contribute to the formation of the active site. Post-translationally, phosphorylated by spo0F.

The protein resides in the cytoplasm. Functionally, key element in the phosphorelay regulating sporulation initiation. Acts on spo0A. Mediates reversible phosphoryl transfer from spo0F to spo0A. This Bacillus subtilis (strain 168) protein is Sporulation initiation phosphotransferase B (spo0B).